The primary structure comprises 471 residues: Metalloprotease TIKI homolog (471 aa).

The signal sequence occupies residues 1 to 24 (MAAFTLWILVLNVFLLGFQARKLA). Residues 25–449 (SNLKFPIQKC…SRKAAASCTP (425 aa)) lie on the Extracellular side of the membrane. N-linked (GlcNAc...) asparagine glycans are attached at residues Asn-226, Asn-235, Asn-284, and Asn-342. Residues 369–402 (KAKKSLNTRRERRKGCRGRRKKSKRCQKKKKRKR) are compositionally biased toward basic residues. A disordered region spans residues 369-406 (KAKKSLNTRRERRKGCRGRRKKSKRCQKKKKRKRPDYS). A helical transmembrane segment spans residues 450 to 470 (IWTVSLALTCAVTCLLTYSGF). A topological domain (cytoplasmic) is located at residue Arg-471.

This sequence belongs to the TIKI family. It depends on Mn(2+) as a cofactor. The cofactor is Co(2+).

Its subcellular location is the membrane. Its function is as follows. Metalloprotease. This Nematostella vectensis (Starlet sea anemone) protein is Metalloprotease TIKI homolog.